A 131-amino-acid chain; its full sequence is Small ribosomal subunit protein uS8 (131 aa).

The protein belongs to the universal ribosomal protein uS8 family. As to quaternary structure, part of the 30S ribosomal subunit. Contacts proteins S5 and S12.

In terms of biological role, one of the primary rRNA binding proteins, it binds directly to 16S rRNA central domain where it helps coordinate assembly of the platform of the 30S subunit. This Delftia acidovorans (strain DSM 14801 / SPH-1) protein is Small ribosomal subunit protein uS8.